A 160-amino-acid chain; its full sequence is Cathelin-related peptide SC5 (160 aa).

Residues 1-29 (METQRASLSLGRCSLWLLLLGLALPSASA) form the signal peptide. A propeptide spanning residues 30–131 (QVLSYREAVL…DITCAEPQSV (102 aa)) is cleaved from the precursor. Intrachain disulfides connect cysteine 86–cysteine 97 and cysteine 108–cysteine 125.

Belongs to the cathelicidin family.

It localises to the secreted. Its function is as follows. Broad spectrum bactericidal agent. This chain is Cathelin-related peptide SC5, found in Ovis aries (Sheep).